The sequence spans 229 residues: 3-beta-hydroxysteroid-Delta(8),Delta(7)-isomerase (229 aa).

Transmembrane regions (helical) follow at residues 30 to 50 (WYIV…MWLL), 67 to 87 (VCWF…FVLY), 119 to 139 (IICM…WAVI), and 186 to 206 (FWFY…VLFF). The EXPERA domain occupies 62–205 (WRRLSVCWFA…LWLVIPGVLF (144 aa)).

Belongs to the EBP family. Highly expressed in liver, bowel, adrenal gland, testis, ovary, and uterus and less expressed in brain, cerebellum, skeletal muscle, and heart.

The protein resides in the endoplasmic reticulum membrane. It localises to the nucleus envelope. The protein localises to the cytoplasmic vesicle. It catalyses the reaction lathosterol = 5alpha-cholest-8-en-3beta-ol. The enzyme catalyses zymosterol = 5alpha-cholesta-7,24-dien-3beta-ol. The catalysed reaction is 5,6alpha-epoxy-5alpha-cholestan-3beta-ol + H2O = 5alpha-cholestane-3beta,5,6beta-triol. It carries out the reaction 5,6beta-epoxy-5beta-cholestan-3beta-ol + H2O = 5alpha-cholestane-3beta,5,6beta-triol. It participates in steroid biosynthesis; cholesterol biosynthesis. Functionally, isomerase that catalyzes the conversion of Delta(8)-sterols to their corresponding Delta(7)-isomers. Component of the microsomal antiestrogen binding site (AEBS), a multiproteic complex at the ER membrane that consists of an association between EBP and 7-dehydrocholesterol reductase/DHCR7. This complex is responsible for cholesterol-5,6-epoxide hydrolase (ChEH) activity, which consists in the hydration of cholesterol-5,6-epoxides (5,6-EC) into cholestane-3beta,5alpha,6beta-triol (CT). The precise role of each component of this complex has not been described yet. This Cavia porcellus (Guinea pig) protein is 3-beta-hydroxysteroid-Delta(8),Delta(7)-isomerase (EBP).